The sequence spans 209 residues: Ribosomal RNA large subunit methyltransferase E (209 aa).

S-adenosyl-L-methionine-binding residues include Gly-63, Trp-65, Asp-83, Asp-99, and Asp-124. Residue Lys-164 is the Proton acceptor of the active site.

Belongs to the class I-like SAM-binding methyltransferase superfamily. RNA methyltransferase RlmE family.

Its subcellular location is the cytoplasm. It catalyses the reaction uridine(2552) in 23S rRNA + S-adenosyl-L-methionine = 2'-O-methyluridine(2552) in 23S rRNA + S-adenosyl-L-homocysteine + H(+). Functionally, specifically methylates the uridine in position 2552 of 23S rRNA at the 2'-O position of the ribose in the fully assembled 50S ribosomal subunit. The sequence is that of Ribosomal RNA large subunit methyltransferase E from Shewanella sp. (strain ANA-3).